Reading from the N-terminus, the 433-residue chain is Tol-Pal system protein TolB (433 aa).

Residues 1–21 (MRNLLRGMLVVICCMAGIAAA) form the signal peptide.

It belongs to the TolB family. The Tol-Pal system is composed of five core proteins: the inner membrane proteins TolA, TolQ and TolR, the periplasmic protein TolB and the outer membrane protein Pal. They form a network linking the inner and outer membranes and the peptidoglycan layer.

It localises to the periplasm. In terms of biological role, part of the Tol-Pal system, which plays a role in outer membrane invagination during cell division and is important for maintaining outer membrane integrity. This is Tol-Pal system protein TolB from Pseudomonas fluorescens (strain SBW25).